Reading from the N-terminus, the 147-residue chain is Ribosome-binding factor A (147 aa).

The disordered stretch occupies residues 127–147; the sequence is AAEARHAGEPDPYKTDRDDAE.

The protein belongs to the RbfA family. As to quaternary structure, monomer. Binds 30S ribosomal subunits, but not 50S ribosomal subunits or 70S ribosomes.

The protein localises to the cytoplasm. Its function is as follows. One of several proteins that assist in the late maturation steps of the functional core of the 30S ribosomal subunit. Associates with free 30S ribosomal subunits (but not with 30S subunits that are part of 70S ribosomes or polysomes). Required for efficient processing of 16S rRNA. May interact with the 5'-terminal helix region of 16S rRNA. The chain is Ribosome-binding factor A from Nocardia farcinica (strain IFM 10152).